Here is a 215-residue protein sequence, read N- to C-terminus: uncharacterized protein (215 aa).

Helical transmembrane passes span 1-21 (MTAEFIIRLILAAIACGAIGM), 36-56 (VLIGMGSALFMIVSKYGFADV), 67-87 (SRIAAQVVTGVGFIGAGNILV), 92-112 (IVGLTTAADIWVTAAIGMVIG), and 118-138 (LGIYGSVMTLLVLEVFHQLTF).

Belongs to the MgtC/SapB family.

It localises to the cell inner membrane. This is an uncharacterized protein from Escherichia coli O157:H7.